A 968-amino-acid chain; its full sequence is A disintegrin and metalloproteinase with thrombospondin motifs 1 (968 aa).

2 disordered regions span residues Met1–Arg23 and Ala177–Arg253. Residues Met1 to Cys48 form the signal peptide. The propeptide occupies Ala49 to Arg253. Positions Ala204 to Asp211 match the Cysteine switch motif. Cys206 serves as a coordination point for Zn(2+). The span at Leu214–Gln229 shows a compositional bias: polar residues. A Peptidase M12B domain is found at Arg259–Pro468. Ca(2+) is bound by residues Glu262, Asp345, and Asp352. 4 disulfides stabilise this stretch: Cys334–Cys386, Cys363–Cys368, Cys380–Cys463, and Cys418–Cys447. His402 serves as a coordination point for Zn(2+). Glu403 is a catalytic residue. Zn(2+) contacts are provided by His406 and His412. Residues Cys463 and Asp466 each coordinate Ca(2+). Residues Asp477–Val559 enclose the Disintegrin domain. Intrachain disulfides connect Cys489–Cys512, Cys500–Cys522, Cys507–Cys541, and Cys535–Cys546. Residue Asn548 is glycosylated (N-linked (GlcNAc...) asparagine). One can recognise a TSP type-1 1 domain in the interval His560 to Pro615. Cystine bridges form between Cys572–Cys609, Cys576–Cys614, and Cys587–Cys599. 3 N-linked (GlcNAc...) asparagine glycosylation sites follow: Asn721, Asn765, and Asn783. The interval Lys726 to Phe850 is spacer. 2 consecutive TSP type-1 domains span residues Thr855–Pro911 and His912–Ser968. A glycan (N-linked (GlcNAc...) asparagine) is linked at Asn946.

It depends on Zn(2+) as a cofactor. In terms of processing, the precursor is cleaved by a furin endopeptidase. Glycosylated. Can be O-fucosylated by POFUT2 on a serine or a threonine residue found within the consensus sequence C1-X(2)-(S/T)-C2-G of the TSP type-1 repeat domains where C1 and C2 are the first and second cysteine residue of the repeat, respectively. Fucosylated repeats can then be further glycosylated by the addition of a beta-1,3-glucose residue by the glucosyltransferase, B3GALTL. Fucosylation mediates the efficient secretion of ADAMTS family members. Can also be C-glycosylated with one or two mannose molecules on tryptophan residues within the consensus sequence W-X-X-W of the TPRs, and N-glycosylated. These other glycosylations can also facilitate secretion.

The protein resides in the secreted. Its subcellular location is the extracellular space. It localises to the extracellular matrix. Functionally, metalloprotease which cleaves aggrecan, a cartilage proteoglycan, at the '1691-Glu-|-Leu-1692' site (within the chondroitin sulfate attachment domain), and may be involved in its turnover. Also cleaves COMP. Has angiogenic inhibitor activity. May play a critical role in follicular rupture. The sequence is that of A disintegrin and metalloproteinase with thrombospondin motifs 1 (Adamts1) from Mus musculus (Mouse).